The following is a 449-amino-acid chain: Kynurenine 3-monooxygenase (449 aa).

It belongs to the aromatic-ring hydroxylase family. KMO subfamily. The cofactor is FAD.

The enzyme catalyses L-kynurenine + NADPH + O2 + H(+) = 3-hydroxy-L-kynurenine + NADP(+) + H2O. The protein operates within cofactor biosynthesis; NAD(+) biosynthesis; quinolinate from L-kynurenine: step 1/3. Catalyzes the hydroxylation of L-kynurenine (L-Kyn) to form 3-hydroxy-L-kynurenine (L-3OHKyn). Required for synthesis of quinolinic acid. The polypeptide is Kynurenine 3-monooxygenase (Legionella pneumophila (strain Lens)).